Reading from the N-terminus, the 203-residue chain is Orotate phosphoribosyltransferase (203 aa).

Residues Arg-94, Lys-98, His-100, and Glu-120 to Ser-128 contribute to the 5-phospho-alpha-D-ribose 1-diphosphate site. Ser-124 serves as a coordination point for orotate.

The protein belongs to the purine/pyrimidine phosphoribosyltransferase family. PyrE subfamily. Homodimer. Mg(2+) serves as cofactor.

The catalysed reaction is orotidine 5'-phosphate + diphosphate = orotate + 5-phospho-alpha-D-ribose 1-diphosphate. It participates in pyrimidine metabolism; UMP biosynthesis via de novo pathway; UMP from orotate: step 1/2. Its function is as follows. Catalyzes the transfer of a ribosyl phosphate group from 5-phosphoribose 1-diphosphate to orotate, leading to the formation of orotidine monophosphate (OMP). This chain is Orotate phosphoribosyltransferase, found in Staphylococcus epidermidis (strain ATCC 35984 / DSM 28319 / BCRC 17069 / CCUG 31568 / BM 3577 / RP62A).